Here is a 201-residue protein sequence, read N- to C-terminus: MRIGIISVGPGNIMNLYRGVKRASENFEDVSIELVESPRNDLYDLLFIPGVGHFGEGMRRLRENDLIDFVRKHVEDERYVVGVCLGMQLLFEESEEAPGVKGLSLIEGNVVKLRSRRLPHMGWNEVIFKDTFPNGYYYFVHTYRAVCEEEHVLGTTEYDGEIFPSAVRKGRILGFQFHPEKSSKIGRKLLEKVIECSLSRR.

The Glutamine amidotransferase type-1 domain maps to 2–201 (RIGIISVGPG…KVIECSLSRR (200 aa)). The active-site Nucleophile is Cys84. Active-site residues include His178 and Glu180.

Heterodimer of HisH and HisF.

Its subcellular location is the cytoplasm. The enzyme catalyses 5-[(5-phospho-1-deoxy-D-ribulos-1-ylimino)methylamino]-1-(5-phospho-beta-D-ribosyl)imidazole-4-carboxamide + L-glutamine = D-erythro-1-(imidazol-4-yl)glycerol 3-phosphate + 5-amino-1-(5-phospho-beta-D-ribosyl)imidazole-4-carboxamide + L-glutamate + H(+). The catalysed reaction is L-glutamine + H2O = L-glutamate + NH4(+). The protein operates within amino-acid biosynthesis; L-histidine biosynthesis; L-histidine from 5-phospho-alpha-D-ribose 1-diphosphate: step 5/9. Its activity is regulated as follows. Activated by the binding of either IGP or PRFAR to the active site of HisF. In terms of biological role, IGPS catalyzes the conversion of PRFAR and glutamine to IGP, AICAR and glutamate. The HisH subunit catalyzes the hydrolysis of glutamine to glutamate and ammonia as part of the synthesis of IGP and AICAR. The resulting ammonia molecule is channeled to the active site of HisF. In Thermotoga maritima (strain ATCC 43589 / DSM 3109 / JCM 10099 / NBRC 100826 / MSB8), this protein is Imidazole glycerol phosphate synthase subunit HisH (hisH).